Here is a 306-residue protein sequence, read N- to C-terminus: Protease HtpX homolog (306 aa).

2 helical membrane passes run 10–30 (TTLL…ATGG) and 33–53 (QTLS…YWFS). Histidine 135 contacts Zn(2+). Glutamate 136 is an active-site residue. Histidine 139 serves as a coordination point for Zn(2+). A run of 2 helical transmembrane segments spans residues 149-169 (AIAS…MYFG) and 181-201 (GLGL…ASLI). Glutamate 210 lines the Zn(2+) pocket.

The protein belongs to the peptidase M48B family. Zn(2+) serves as cofactor.

The protein resides in the cell membrane. The protein is Protease HtpX homolog of Bifidobacterium longum (strain NCC 2705).